Reading from the N-terminus, the 361-residue chain is Chorismate synthase (361 aa).

Arginine 48 lines the NADP(+) pocket. Residues 125-127 (RSS), 238-239 (NA), glycine 278, 293-297 (KPTSS), and arginine 319 contribute to the FMN site.

Belongs to the chorismate synthase family. In terms of assembly, homotetramer. Requires FMNH2 as cofactor.

The enzyme catalyses 5-O-(1-carboxyvinyl)-3-phosphoshikimate = chorismate + phosphate. The protein operates within metabolic intermediate biosynthesis; chorismate biosynthesis; chorismate from D-erythrose 4-phosphate and phosphoenolpyruvate: step 7/7. In terms of biological role, catalyzes the anti-1,4-elimination of the C-3 phosphate and the C-6 proR hydrogen from 5-enolpyruvylshikimate-3-phosphate (EPSP) to yield chorismate, which is the branch point compound that serves as the starting substrate for the three terminal pathways of aromatic amino acid biosynthesis. This reaction introduces a second double bond into the aromatic ring system. The chain is Chorismate synthase from Aliivibrio fischeri (strain MJ11) (Vibrio fischeri).